The sequence spans 257 residues: Acetylglutamate kinase (257 aa).

Substrate contacts are provided by residues 43–44 (GG), R65, and N157. Residues 180 to 185 (DISSIL) and 208 to 210 (IIT) each bind ATP.

This sequence belongs to the acetylglutamate kinase family. ArgB subfamily. Homodimer.

It localises to the cytoplasm. The enzyme catalyses N-acetyl-L-glutamate + ATP = N-acetyl-L-glutamyl 5-phosphate + ADP. It functions in the pathway amino-acid biosynthesis; L-arginine biosynthesis; N(2)-acetyl-L-ornithine from L-glutamate: step 2/4. Catalyzes the ATP-dependent phosphorylation of N-acetyl-L-glutamate. The sequence is that of Acetylglutamate kinase from Buchnera aphidicola subsp. Acyrthosiphon pisum (strain Tuc7).